A 114-amino-acid chain; its full sequence is MVTKEQRRQKIKARVRGKISGTQERPRLTVFRSNKQIYAQLIDDIAGRTLASASSLKLEMTGSKKEIAAKVGDEIAKAATEAGISTVVFDRNGYLFHGRIKELADAARKGGLKF.

This sequence belongs to the universal ribosomal protein uL18 family. Part of the 50S ribosomal subunit; part of the 5S rRNA/L5/L18/L25 subcomplex. Contacts the 5S and 23S rRNAs.

Its function is as follows. This is one of the proteins that bind and probably mediate the attachment of the 5S RNA into the large ribosomal subunit, where it forms part of the central protuberance. The sequence is that of Large ribosomal subunit protein uL18 from Porphyromonas gingivalis (strain ATCC 33277 / DSM 20709 / CIP 103683 / JCM 12257 / NCTC 11834 / 2561).